The chain runs to 154 residues: GTP-dependent dephospho-CoA kinase (154 aa).

GTP contacts are provided by aspartate 34, aspartate 53, and glutamate 107.

This sequence belongs to the GTP-dependent DPCK family.

The enzyme catalyses 3'-dephospho-CoA + GTP = GDP + CoA + H(+). Its pathway is cofactor biosynthesis; coenzyme A biosynthesis. In terms of biological role, catalyzes the GTP-dependent phosphorylation of the 3'-hydroxyl group of dephosphocoenzyme A to form coenzyme A (CoA). The polypeptide is GTP-dependent dephospho-CoA kinase (Nitrosopumilus maritimus (strain SCM1)).